The chain runs to 232 residues: Ion-translocating oxidoreductase complex subunit E (232 aa).

6 helical membrane passes run 18–38 (GLVQ…LTNA), 39–59 (LGLG…VSLV), 69–89 (IPVF…LINA), 93–113 (GLYL…IIIG), 127–147 (AAFD…VLGA), and 182–202 (PFLL…LIAL).

Belongs to the NqrDE/RnfAE family. The complex is composed of six subunits: RnfA, RnfB, RnfC, RnfD, RnfE and RnfG.

The protein localises to the cell inner membrane. In terms of biological role, part of a membrane-bound complex that couples electron transfer with translocation of ions across the membrane. The polypeptide is Ion-translocating oxidoreductase complex subunit E (Shewanella sp. (strain MR-4)).